The following is a 483-amino-acid chain: UDP-glucosyl transferase 73B2 (483 aa).

Histidine 22 acts as the Proton acceptor in catalysis. An anthocyanidin is bound at residue histidine 22. Catalysis depends on aspartate 133, which acts as the Charge relay. 7 residues coordinate UDP-alpha-D-glucose: alanine 355, glutamine 357, histidine 372, tryptophan 375, asparagine 376, serine 377, and glutamate 380. Alanine 395 provides a ligand contact to an anthocyanidin. Glutamate 396 and glutamine 397 together coordinate UDP-alpha-D-glucose.

It belongs to the UDP-glycosyltransferase family. As to expression, expressed in roots and flowers.

The enzyme catalyses a 7-O-hydroxy-flavonol + UDP-alpha-D-glucose = a flavonol 7-O-beta-D-glucoside + UDP + H(+). It participates in secondary metabolite biosynthesis; flavonoid biosynthesis. Its function is as follows. Catalyzes the glycosylation of flavonoids from UDP-glucose. Uses a wide range of flavonoid substrates including flavonols (quercetin, kaempferol, isorhamnetin, 3-OH 7,2',4'-MeO-flavone), flavones (luteolin, apigenin), flavanones (naringenin, hesperetin), flavanonols (taxifolin), isoflavones (genistein, daidzein), flavonol glycosides (quercitrin, isoquercitrin, rutin), and chalcones (isoliquiritigenin). Specific for the C-7 position, with a 20-fold lower activity for the C-3 position. The chain is UDP-glucosyl transferase 73B2 (UGT73B2) from Arabidopsis thaliana (Mouse-ear cress).